The chain runs to 461 residues: Putative 2,3-dihydroxypropane-1-sulfonate exporter (461 aa).

The Cytoplasmic segment spans residues 1–20 (MSHITTEDPATLRLPFKEKL). The chain crosses the membrane as a helical span at residues 21 to 41 (SYGIGDLASNILLDIGTLYLL). Residues 42-47 (KFYTDV) are Periplasmic-facing. The helical transmembrane segment at 48–68 (LGLPGTYGGIIFLISKFFTAF) threads the bilayer. Over 69 to 92 (TDMGTGIMLDSRRKIGPKGKFRPF) the chain is Cytoplasmic. A helical transmembrane segment spans residues 93-113 (ILYASFPVTLLAIANFVGTPF). Residues 114-123 (DVTGKTVMAT) are Periplasmic-facing. Residues 124–144 (ILFMLYGLFFSMMNCSYGAMV) form a helical membrane-spanning segment. Residues 145–162 (PAITKNPNERASLAAWRQ) lie on the Cytoplasmic side of the membrane. The chain crosses the membrane as a helical span at residues 163–183 (GGATLGLLLCTVGFVPVMNLI). Topologically, residues 184 to 188 (EGNQQ) are periplasmic. The helical transmembrane segment at 189–209 (LGYIFAATLFSLFGLLFMWIC) threads the bilayer. Residues 210 to 243 (YSGVKERYVETQPANPAQKPGLLQSFRAIAGNRP) are Cytoplasmic-facing. The helical transmembrane segment at 244–264 (LFILCIANLCTLGAFNVKLAI) threads the bilayer. Residues 265 to 276 (QVYYTQYVLNDP) lie on the Periplasmic side of the membrane. Residues 277-297 (ILLSYMGFFSMGCIFIGVFLM) traverse the membrane as a helical segment. The Cytoplasmic segment spans residues 298 to 308 (PASVRRFGKKK). A helical membrane pass occupies residues 309 to 329 (VYIGGLLIWVLGDLLNYFFGG). Position 330 (G330) is a topological domain, periplasmic. Residues 331-351 (SVSFVAFSCLAFFGSAFVNSL) form a helical membrane-spanning segment. Residues 352 to 387 (NWALVSDTVEYGEWRTGVRSEGTVYTGFTFFRKVSQ) lie on the Cytoplasmic side of the membrane. The helical transmembrane segment at 388-408 (ALAGFFPGWMLTQIGYVPNVA) threads the bilayer. At 409–419 (QADHTIEGLRQ) the chain is on the periplasmic side. A helical membrane pass occupies residues 420–440 (LIFIYPSALAVVTIVAMGCFY). Residues 441 to 461 (SLNEKMYVRIVEEIEARKRTA) are Cytoplasmic-facing.

The protein belongs to the sodium:galactoside symporter (TC 2.A.2) family.

It is found in the cell inner membrane. Could be involved in the export of 2,3-dihydroxypropane-1-sulfonate (DHPS). The sequence is that of Putative 2,3-dihydroxypropane-1-sulfonate exporter (yihP) from Escherichia coli (strain K12).